We begin with the raw amino-acid sequence, 225 residues long: Glutathione S-transferase Mu 3 (225 aa).

The GST N-terminal domain occupies 5–92; sequence SSMVLGYWDI…YIARKHNMCG (88 aa). Glutathione is bound by residues 11-12, 50-54, and 63-64; these read YW, WLDVK, and NL. K54 is covalently cross-linked (Glycyl lysine isopeptide (Lys-Gly) (interchain with G-Cter in SUMO2)). K73 is covalently cross-linked (Glycyl lysine isopeptide (Lys-Gly) (interchain with G-Cter in SUMO2)). Residue 76-77 coordinates glutathione; the sequence is QS. Residues 94–212 enclose the GST C-terminal domain; the sequence is TEEEKIRVDI…QSDQFFKMPI (119 aa). Y120 serves as a coordination point for substrate.

It belongs to the GST superfamily. Mu family. In terms of assembly, homodimer.

The protein localises to the cytoplasm. It carries out the reaction RX + glutathione = an S-substituted glutathione + a halide anion + H(+). Conjugation of reduced glutathione to a wide number of exogenous and endogenous hydrophobic electrophiles. May govern uptake and detoxification of both endogenous compounds and xenobiotics at the testis and brain blood barriers. This chain is Glutathione S-transferase Mu 3 (GSTM3), found in Macaca fuscata fuscata (Japanese macaque).